The sequence spans 583 residues: 2-succinyl-5-enolpyruvyl-6-hydroxy-3-cyclohexene-1-carboxylate synthase (583 aa).

The protein belongs to the TPP enzyme family. MenD subfamily. In terms of assembly, homodimer. Mg(2+) is required as a cofactor. It depends on Mn(2+) as a cofactor. Requires thiamine diphosphate as cofactor.

It carries out the reaction isochorismate + 2-oxoglutarate + H(+) = 5-enolpyruvoyl-6-hydroxy-2-succinyl-cyclohex-3-ene-1-carboxylate + CO2. Its pathway is quinol/quinone metabolism; 1,4-dihydroxy-2-naphthoate biosynthesis; 1,4-dihydroxy-2-naphthoate from chorismate: step 2/7. The protein operates within quinol/quinone metabolism; menaquinone biosynthesis. Catalyzes the thiamine diphosphate-dependent decarboxylation of 2-oxoglutarate and the subsequent addition of the resulting succinic semialdehyde-thiamine pyrophosphate anion to isochorismate to yield 2-succinyl-5-enolpyruvyl-6-hydroxy-3-cyclohexene-1-carboxylate (SEPHCHC). This Roseiflexus sp. (strain RS-1) protein is 2-succinyl-5-enolpyruvyl-6-hydroxy-3-cyclohexene-1-carboxylate synthase.